Reading from the N-terminus, the 213-residue chain is 3,4-dihydroxy-2-butanone 4-phosphate synthase (213 aa).

Residues 37-38 (RE), Asp42, 150-154 (RAGHT), and Glu174 contribute to the D-ribulose 5-phosphate site. Glu38 is a Mg(2+) binding site. His153 provides a ligand contact to Mg(2+).

This sequence belongs to the DHBP synthase family. As to quaternary structure, homodimer. Mg(2+) serves as cofactor. Mn(2+) is required as a cofactor.

It carries out the reaction D-ribulose 5-phosphate = (2S)-2-hydroxy-3-oxobutyl phosphate + formate + H(+). It participates in cofactor biosynthesis; riboflavin biosynthesis; 2-hydroxy-3-oxobutyl phosphate from D-ribulose 5-phosphate: step 1/1. Its function is as follows. Catalyzes the conversion of D-ribulose 5-phosphate to formate and 3,4-dihydroxy-2-butanone 4-phosphate. The polypeptide is 3,4-dihydroxy-2-butanone 4-phosphate synthase (Buchnera aphidicola subsp. Schizaphis graminum (strain Sg)).